The chain runs to 305 residues: Oxidoreductase swnR (305 aa).

Belongs to the NmrA-type oxidoreductase family. Isoflavone reductase subfamily.

It carries out the reaction L-pipecolate + O2 = L-1-piperideine-6-carboxylate + H2O2 + H(+). It functions in the pathway mycotoxin biosynthesis. Oxidoreductase; part of the gene cluster that mediates the biosynthesis of swainsonine (SW), a cytotoxic fungal alkaloid and a potential cancer therapy drug. Swainsonine production occurs via a multibranched pathway and is dispensable for fungal colonization of plants and infection of insect hosts. The first step of swainsonine biosynthesis is the production of the precursor pipecolic acid (PA) via conversion of L-lysine (Lys) to 1-piperideine-6-carboxylate (P6C) by the aminotransferase swnA, the latter being further reduced to PA by the reductase swnR. PA can be converted from lysine by both the SW biosynthetic cluster and the unclustered genes such as lysine cyclodeaminase. The PKS-NRPS hybrid synthetase swnK uptakes and condensates PA and malonyl-CoA with and without skipping of the ketoreductase (KR) domain in order to produce 3 intermediates, 1-oxoindolizidine, (1S)-1-hydroxyindolizin, and (1R)-1-hydroxyindolizine; with the transisomer (1S)-1-hydroxyindolizin being predominant. The terminal thioester reductase (TE) domain of swnK is involved in reduction of the thioester bond to release the intermediate aldehydes. The oxidoreductase swnN could contribute to the reduction of 1-oxoindolizidine to (1S)-1-hydroxyindolizin and (1R)-1-hydroxyindolizine, contributing to the major route of SW production. The dioxygenase swnH2 would be responsible for the oxidization of (1R)-1-hydroxyindolizine into (1R,2S)-1,2-dihydroxyindolizine and of (1S)-1-hydroxyindolizin to yield both (1R,2S)-1,2-dihydroxyindolizine and (1S,2S)-1,2-dihydroxyindolizine. The dioxygenase swnH1 then performs the conversion of the 1,2-dihydroxyindolizine epimers to SW. The polypeptide is Oxidoreductase swnR (Metarhizium robertsii (strain ARSEF 23 / ATCC MYA-3075) (Metarhizium anisopliae (strain ARSEF 23))).